Here is a 293-residue protein sequence, read N- to C-terminus: Bifunctional protein FolD (293 aa).

NADP(+)-binding positions include Gly165–Ser167, Ser190, and Ile231.

It belongs to the tetrahydrofolate dehydrogenase/cyclohydrolase family. In terms of assembly, homodimer.

It carries out the reaction (6R)-5,10-methylene-5,6,7,8-tetrahydrofolate + NADP(+) = (6R)-5,10-methenyltetrahydrofolate + NADPH. It catalyses the reaction (6R)-5,10-methenyltetrahydrofolate + H2O = (6R)-10-formyltetrahydrofolate + H(+). It participates in one-carbon metabolism; tetrahydrofolate interconversion. Its function is as follows. Catalyzes the oxidation of 5,10-methylenetetrahydrofolate to 5,10-methenyltetrahydrofolate and then the hydrolysis of 5,10-methenyltetrahydrofolate to 10-formyltetrahydrofolate. This is Bifunctional protein FolD from Synechococcus sp. (strain CC9902).